The chain runs to 130 residues: Histone H2A type 1 (130 aa).

Residues 1–22 (MSGRGKQGGKTRAKAKTRSSRA) form a disordered region. An N-acetylserine modification is found at Ser-2. Residue Ser-2 is modified to Phosphoserine. Lys-6 is modified (N6-(2-hydroxyisobutyryl)lysine). Lys-6 is modified (N6-acetyllysine). Over residues 7 to 19 (QGGKTRAKAKTRS) the composition is skewed to basic residues. Lys-10 carries the post-translational modification N6-(2-hydroxyisobutyryl)lysine; alternate. The residue at position 10 (Lys-10) is an N6-lactoyllysine; alternate. Lys-10 is modified (N6-succinyllysine). Glycyl lysine isopeptide (Lys-Gly) (interchain with G-Cter in ubiquitin) cross-links involve residues Lys-14 and Lys-16. Lys-37 is subject to N6-(2-hydroxyisobutyryl)lysine; alternate. 2 positions are modified to N6-(2-hydroxyisobutyryl)lysine: Lys-75 and Lys-76. An N6-(2-hydroxyisobutyryl)lysine; alternate modification is found at Lys-96. Lys-96 carries the post-translational modification N6-succinyllysine. Lys-96 is subject to N6-glutaryllysine; alternate. Gln-105 carries the N5-methylglutamine modification. At Lys-119 the chain carries N6-(2-hydroxyisobutyryl)lysine; alternate. Position 119 is an N6-glutaryllysine; alternate (Lys-119). A Glycyl lysine isopeptide (Lys-Gly) (interchain with G-Cter in ubiquitin) cross-link involves residue Lys-120.

It belongs to the histone H2A family. In terms of assembly, the nucleosome is a histone octamer containing two molecules each of H2A, H2B, H3 and H4 assembled in one H3-H4 heterotetramer and two H2A-H2B heterodimers. The octamer wraps approximately 147 bp of DNA. Monoubiquitination of Lys-120 (H2AK119Ub) gives a specific tag for epigenetic transcriptional repression. Following DNA double-strand breaks (DSBs), it is ubiquitinated through 'Lys-63' linkage of ubiquitin moieties, leading to the recruitment of repair proteins to sites of DNA damage. H2AK119Ub and ionizing radiation-induced 'Lys-63'-linked ubiquitination are distinct events. In terms of processing, phosphorylation on Ser-2 is enhanced during mitosis. Phosphorylation on Ser-2 directly represses transcription. Post-translationally, glutamine methylation at Gln-105 (H2AQ104me) by FBL is specifically dedicated to polymerase I. It is present at 35S ribosomal DNA locus and impairs binding of the FACT complex.

The protein localises to the nucleus. Its subcellular location is the chromosome. Its function is as follows. Core component of nucleosome. Nucleosomes wrap and compact DNA into chromatin, limiting DNA accessibility to the cellular machineries which require DNA as a template. Histones thereby play a central role in transcription regulation, DNA repair, DNA replication and chromosomal stability. DNA accessibility is regulated via a complex set of post-translational modifications of histones, also called histone code, and nucleosome remodeling. This chain is Histone H2A type 1, found in Xenopus laevis (African clawed frog).